Consider the following 133-residue polypeptide: ATP synthase epsilon chain (133 aa).

The protein belongs to the ATPase epsilon chain family. In terms of assembly, F-type ATPases have 2 components, CF(1) - the catalytic core - and CF(0) - the membrane proton channel. CF(1) has five subunits: alpha(3), beta(3), gamma(1), delta(1), epsilon(1). CF(0) has three main subunits: a, b and c.

Its subcellular location is the cell membrane. In terms of biological role, produces ATP from ADP in the presence of a proton gradient across the membrane. This chain is ATP synthase epsilon chain, found in Bacillus mycoides (strain KBAB4) (Bacillus weihenstephanensis).